Reading from the N-terminus, the 756-residue chain is 5-methyltetrahydropteroyltriglutamate--homocysteine methyltransferase (756 aa).

5-methyltetrahydropteroyltri-L-glutamate contacts are provided by residues 16–19 (RELK) and K112. L-homocysteine is bound by residues 432 to 434 (IGS) and E485. Residues 432–434 (IGS) and E485 each bind L-methionine. Residues 516–517 (RC) and W562 each bind 5-methyltetrahydropteroyltri-L-glutamate. L-homocysteine is bound at residue D600. Residue D600 coordinates L-methionine. 5-methyltetrahydropteroyltri-L-glutamate is bound at residue E606. Positions 642, 644, and 666 each coordinate Zn(2+). H695 serves as the catalytic Proton donor. C727 lines the Zn(2+) pocket.

It belongs to the vitamin-B12 independent methionine synthase family. The cofactor is Zn(2+).

It carries out the reaction 5-methyltetrahydropteroyltri-L-glutamate + L-homocysteine = tetrahydropteroyltri-L-glutamate + L-methionine. The protein operates within amino-acid biosynthesis; L-methionine biosynthesis via de novo pathway; L-methionine from L-homocysteine (MetE route): step 1/1. Functionally, catalyzes the transfer of a methyl group from 5-methyltetrahydrofolate to homocysteine resulting in methionine formation. This Haemophilus influenzae (strain PittEE) protein is 5-methyltetrahydropteroyltriglutamate--homocysteine methyltransferase.